Reading from the N-terminus, the 443-residue chain is BBSome complex member BBS5 homolog (443 aa).

It belongs to the BBS5 family.

The protein resides in the cytoplasm. Its subcellular location is the cytoskeleton. It localises to the flagellum axoneme. This chain is BBSome complex member BBS5 homolog, found in Giardia intestinalis (strain ATCC 50803 / WB clone C6) (Giardia lamblia).